We begin with the raw amino-acid sequence, 65 residues long: MAKKGTRIVVTLECTESRTVPSSKKRSAGVSRYTTEKNRRNTTERLELKKFCPELNKMTIHREIK.

The interval 19–40 is disordered; it reads TVPSSKKRSAGVSRYTTEKNRR.

Belongs to the bacterial ribosomal protein bL33 family.

The polypeptide is Large ribosomal subunit protein bL33 (Prochlorococcus marinus (strain NATL2A)).